The sequence spans 130 residues: MTDYCYPKAKRLLKPAEFKPVFNQPLFKVHQTHFMAFAYDSDHLQARLGMAITKKKIPTAVARNTIKRIIREQFRHTHAQLPALDVVFILKKSTKALSNEQMRQEISDILSKVISKQRRATAADVKHKDK.

This sequence belongs to the RnpA family. Consists of a catalytic RNA component (M1 or rnpB) and a protein subunit.

It catalyses the reaction Endonucleolytic cleavage of RNA, removing 5'-extranucleotides from tRNA precursor.. RNaseP catalyzes the removal of the 5'-leader sequence from pre-tRNA to produce the mature 5'-terminus. It can also cleave other RNA substrates such as 4.5S RNA. The protein component plays an auxiliary but essential role in vivo by binding to the 5'-leader sequence and broadening the substrate specificity of the ribozyme. The chain is Ribonuclease P protein component from Psychrobacter sp. (strain PRwf-1).